Consider the following 344-residue polypeptide: Heat-inducible transcription repressor HrcA (344 aa).

The protein belongs to the HrcA family.

In terms of biological role, negative regulator of class I heat shock genes (grpE-dnaK-dnaJ and groELS operons). Prevents heat-shock induction of these operons. The sequence is that of Heat-inducible transcription repressor HrcA from Streptococcus pneumoniae serotype 19F (strain G54).